The following is a 283-amino-acid chain: Nucleoid occlusion protein (283 aa).

Residues 148–167 (EALAQRLGKGQSTIANKLRL) constitute a DNA-binding region (H-T-H motif).

It belongs to the ParB family.

It is found in the cytoplasm. The protein localises to the nucleoid. Functionally, effects nucleoid occlusion by binding relatively nonspecifically to DNA and preventing the assembly of the division machinery in the vicinity of the nucleoid, especially under conditions that disturb the cell cycle. It helps to coordinate cell division and chromosome segregation by preventing the formation of the Z ring through the nucleoid, which would cause chromosome breakage. The chain is Nucleoid occlusion protein (noc) from Bacillus subtilis (strain 168).